We begin with the raw amino-acid sequence, 550 residues long: CTP synthase (550 aa).

The tract at residues 1–272 (MKTKFIFITG…DQKITSFLNL (272 aa)) is amidoligase domain. Residue serine 14 coordinates CTP. Serine 14 is a binding site for UTP. 15–20 (SLGKGL) provides a ligand contact to ATP. Position 55 (tyrosine 55) interacts with L-glutamine. An ATP-binding site is contributed by aspartate 72. Residues aspartate 72 and glutamate 146 each contribute to the Mg(2+) site. CTP-binding positions include 153 to 155 (DIE), 193 to 198 (KTKPTQ), and lysine 229. UTP-binding positions include 193–198 (KTKPTQ) and lysine 229. One can recognise a Glutamine amidotransferase type-1 domain in the interval 297–550 (TITIVGKYVG…IHAACNHNKQ (254 aa)). Residue glycine 359 coordinates L-glutamine. Residue cysteine 386 is the Nucleophile; for glutamine hydrolysis of the active site. L-glutamine is bound by residues 387 to 390 (LGMQ), glutamate 410, and arginine 478. Catalysis depends on residues histidine 523 and glutamate 525.

This sequence belongs to the CTP synthase family. Homotetramer.

The catalysed reaction is UTP + L-glutamine + ATP + H2O = CTP + L-glutamate + ADP + phosphate + 2 H(+). It catalyses the reaction L-glutamine + H2O = L-glutamate + NH4(+). It carries out the reaction UTP + NH4(+) + ATP = CTP + ADP + phosphate + 2 H(+). Its pathway is pyrimidine metabolism; CTP biosynthesis via de novo pathway; CTP from UDP: step 2/2. With respect to regulation, allosterically activated by GTP, when glutamine is the substrate; GTP has no effect on the reaction when ammonia is the substrate. The allosteric effector GTP functions by stabilizing the protein conformation that binds the tetrahedral intermediate(s) formed during glutamine hydrolysis. Inhibited by the product CTP, via allosteric rather than competitive inhibition. Catalyzes the ATP-dependent amination of UTP to CTP with either L-glutamine or ammonia as the source of nitrogen. Regulates intracellular CTP levels through interactions with the four ribonucleotide triphosphates. The protein is CTP synthase of Lawsonia intracellularis (strain PHE/MN1-00).